The primary structure comprises 943 residues: Isoleucine--tRNA ligase (943 aa).

The short motif at 58–68 (PYANGTIHIGH) is the 'HIGH' region element. Residue Glu-567 coordinates L-isoleucyl-5'-AMP. A 'KMSKS' region motif is present at residues 608 to 612 (KMSKS). Lys-611 serves as a coordination point for ATP. Zn(2+) contacts are provided by Cys-906, Cys-909, Cys-926, and Cys-929.

The protein belongs to the class-I aminoacyl-tRNA synthetase family. IleS type 1 subfamily. In terms of assembly, monomer. Zn(2+) serves as cofactor.

It localises to the cytoplasm. It catalyses the reaction tRNA(Ile) + L-isoleucine + ATP = L-isoleucyl-tRNA(Ile) + AMP + diphosphate. Catalyzes the attachment of isoleucine to tRNA(Ile). As IleRS can inadvertently accommodate and process structurally similar amino acids such as valine, to avoid such errors it has two additional distinct tRNA(Ile)-dependent editing activities. One activity is designated as 'pretransfer' editing and involves the hydrolysis of activated Val-AMP. The other activity is designated 'posttransfer' editing and involves deacylation of mischarged Val-tRNA(Ile). The protein is Isoleucine--tRNA ligase of Pseudomonas fluorescens (strain Pf0-1).